Reading from the N-terminus, the 288-residue chain is Diaminopimelate epimerase (288 aa).

Substrate contacts are provided by N14 and N67. C76 acts as the Proton donor in catalysis. Substrate contacts are provided by residues 77–78 (GN), N166, N199, and 217–218 (ER). C226 (proton acceptor) is an active-site residue. 227–228 (GT) contacts substrate.

Belongs to the diaminopimelate epimerase family. As to quaternary structure, homodimer.

Its subcellular location is the cytoplasm. The enzyme catalyses (2S,6S)-2,6-diaminopimelate = meso-2,6-diaminopimelate. It participates in amino-acid biosynthesis; L-lysine biosynthesis via DAP pathway; DL-2,6-diaminopimelate from LL-2,6-diaminopimelate: step 1/1. Its function is as follows. Catalyzes the stereoinversion of LL-2,6-diaminopimelate (L,L-DAP) to meso-diaminopimelate (meso-DAP), a precursor of L-lysine and an essential component of the bacterial peptidoglycan. This is Diaminopimelate epimerase from Bacillus cereus (strain ATCC 14579 / DSM 31 / CCUG 7414 / JCM 2152 / NBRC 15305 / NCIMB 9373 / NCTC 2599 / NRRL B-3711).